Reading from the N-terminus, the 275-residue chain is Formamidopyrimidine-DNA glycosylase (275 aa).

Catalysis depends on Pro2, which acts as the Schiff-base intermediate with DNA. Glu3 functions as the Proton donor in the catalytic mechanism. Lys58 serves as the catalytic Proton donor; for beta-elimination activity. His91 and Arg110 together coordinate DNA. An FPG-type zinc finger spans residues 238 to 272; that stretch reads QVYGQTGKPCPRCGQAIVKLKVGGRGTHICPKCQK. Catalysis depends on Arg262, which acts as the Proton donor; for delta-elimination activity.

It belongs to the FPG family. As to quaternary structure, monomer. It depends on Zn(2+) as a cofactor.

It catalyses the reaction Hydrolysis of DNA containing ring-opened 7-methylguanine residues, releasing 2,6-diamino-4-hydroxy-5-(N-methyl)formamidopyrimidine.. It carries out the reaction 2'-deoxyribonucleotide-(2'-deoxyribose 5'-phosphate)-2'-deoxyribonucleotide-DNA = a 3'-end 2'-deoxyribonucleotide-(2,3-dehydro-2,3-deoxyribose 5'-phosphate)-DNA + a 5'-end 5'-phospho-2'-deoxyribonucleoside-DNA + H(+). Involved in base excision repair of DNA damaged by oxidation or by mutagenic agents. Acts as a DNA glycosylase that recognizes and removes damaged bases. Has a preference for oxidized purines, such as 7,8-dihydro-8-oxoguanine (8-oxoG). Has AP (apurinic/apyrimidinic) lyase activity and introduces nicks in the DNA strand. Cleaves the DNA backbone by beta-delta elimination to generate a single-strand break at the site of the removed base with both 3'- and 5'-phosphates. The sequence is that of Formamidopyrimidine-DNA glycosylase from Streptococcus pyogenes serotype M18 (strain MGAS8232).